Here is a 471-residue protein sequence, read N- to C-terminus: Glutamate--tRNA ligase (471 aa).

Positions 9 to 19 (PSPTGYLHVGG) match the 'HIGH' region motif. The Zn(2+) site is built by cysteine 98, cysteine 100, cysteine 125, and histidine 127. The short motif at 237–241 (KLSKR) is the 'KMSKS' region element. Residue lysine 240 participates in ATP binding.

It belongs to the class-I aminoacyl-tRNA synthetase family. Glutamate--tRNA ligase type 1 subfamily. Monomer. Requires Zn(2+) as cofactor.

The protein resides in the cytoplasm. It carries out the reaction tRNA(Glu) + L-glutamate + ATP = L-glutamyl-tRNA(Glu) + AMP + diphosphate. Catalyzes the attachment of glutamate to tRNA(Glu) in a two-step reaction: glutamate is first activated by ATP to form Glu-AMP and then transferred to the acceptor end of tRNA(Glu). This is Glutamate--tRNA ligase from Shigella flexneri.